Consider the following 464-residue polypeptide: 3-isopropylmalate dehydratase large subunit (464 aa).

[4Fe-4S] cluster is bound by residues C337, C397, and C400.

This sequence belongs to the aconitase/IPM isomerase family. LeuC type 1 subfamily. As to quaternary structure, heterodimer of LeuC and LeuD. Requires [4Fe-4S] cluster as cofactor.

It carries out the reaction (2R,3S)-3-isopropylmalate = (2S)-2-isopropylmalate. Its pathway is amino-acid biosynthesis; L-leucine biosynthesis; L-leucine from 3-methyl-2-oxobutanoate: step 2/4. Its function is as follows. Catalyzes the isomerization between 2-isopropylmalate and 3-isopropylmalate, via the formation of 2-isopropylmaleate. The protein is 3-isopropylmalate dehydratase large subunit of Bacillus cereus (strain ZK / E33L).